The chain runs to 380 residues: Cytochrome b (380 aa).

A run of 4 helical transmembrane segments spans residues 34-54, 78-99, 114-134, and 179-199; these read FGSL…LLAM, WLIR…YFHI, WNTG…GYVL, and FFAL…IHLT. Residues H84 and H98 each contribute to the heme b site. Heme b-binding residues include H183 and H197. H202 is an a ubiquinone binding site. The next 4 helical transmembrane spans lie at 227-247, 289-309, 321-341, and 348-368; these read LKDI…ALFS, LGGV…PFLH, ISQL…WVGS, and FIII…VLFP.

This sequence belongs to the cytochrome b family. In terms of assembly, the cytochrome bc1 complex contains 11 subunits: 3 respiratory subunits (MT-CYB, CYC1 and UQCRFS1), 2 core proteins (UQCRC1 and UQCRC2) and 6 low-molecular weight proteins (UQCRH/QCR6, UQCRB/QCR7, UQCRQ/QCR8, UQCR10/QCR9, UQCR11/QCR10 and a cleavage product of UQCRFS1). This cytochrome bc1 complex then forms a dimer. Heme b is required as a cofactor.

It localises to the mitochondrion inner membrane. Functionally, component of the ubiquinol-cytochrome c reductase complex (complex III or cytochrome b-c1 complex) that is part of the mitochondrial respiratory chain. The b-c1 complex mediates electron transfer from ubiquinol to cytochrome c. Contributes to the generation of a proton gradient across the mitochondrial membrane that is then used for ATP synthesis. In Pachyptila turtur (Fairy prion), this protein is Cytochrome b (MT-CYB).